The chain runs to 2054 residues: Multiple PDZ domain protein (2054 aa).

The L27 domain maps to 3–63 (ETIDKNRALQ…SLQQLKDQVN (61 aa)). Residues 138-225 (IFELLKPPCG…TIQLVIARGS (88 aa)) form the PDZ 1 domain. S231 is subject to Phosphoserine. PDZ domains lie at 258–338 (TIEL…ARGA), 377–463 (DVEL…MRKG), 545–626 (VAHV…CRRT), and 692–778 (AIEL…VAKP). Residues S782 and S1065 each carry the phosphoserine modification. A PDZ 6 domain is found at 995–1076 (TVTIAKGSSS…IGPDIKITYV (82 aa)). Residues 1110–1129 (PELPEREEGEGEESELQNAA) are disordered. The 93-residue stretch at 1138 to 1230 (RVELWREPSK…PVVFMVQSIV (93 aa)) folds into the PDZ 7 domain. An Omega-N-methylarginine modification is found at R1157. Residues 1261-1273 (LQLTSDKAPSQSE) show a composition bias toward polar residues. Residues 1261 to 1312 (LQLTSDKAPSQSESESEKATLCSVPSSSPSVFSEMSSDYAQPSATTVAEDED) form a disordered region. Positions 1283–1297 (SVPSSSPSVFSEMSS) are enriched in low complexity. Positions 1337-1420 (MIELEKGHSG…KVKIIFIRNA (84 aa)) constitute a PDZ 8 domain. The interval 1433–1454 (AADPLPSTSESPQNKEVEPSIT) is disordered. The PDZ 9 domain occupies 1470–1551 (HLELPKDQGG…TVKLTVGAEN (82 aa)). Positions 1560–1594 (AAVTASGERKDSSQTPAVPAPDLEPIPSTSRSSTP) are disordered. 2 consecutive PDZ domains span residues 1613–1696 (TIEI…YRDE) and 1709–1791 (TVEL…GRIK). Residues 1795 to 1834 (FHSERRPSQSSQVSESSLSSFSLPRSGIHTSESSESSAKK) are disordered. Phosphoserine occurs at positions 1802 and 1808. Positions 1802–1834 (SQSSQVSESSLSSFSLPRSGIHTSESSESSAKK) are enriched in low complexity. PDZ domains follow at residues 1846–1932 (TVEI…VAGG) and 1971–2054 (TITL…MVLS).

Interacts with F11R/JAM, CLDN1, NG2, CXADR, CRB1, MPP4 and PALS1, HTR2A, HTR2B, PLEKHA1/TAPP1 and PLEKHA2/TAPP2. Interacts with CXADR. Interacts with HTR2C, CLDN5, DLG4, GRIN1, SYNGAP1, CAMK2A and CAMK2B. Interacts with FAT4 (via cytoplasmic domain). Interacts with DLL1. As to expression, abundant in all cerebral cortical layers, especially the piriform cortex, the pyramidal cells of the CA1-CA3 subfields of the hippocampus, as well as the granular layer of the dentate gyrus. Detected in the internal granular layer and the mitral cell layer of the olfactory bulb; in the medial habenular nucleus; and in amygdaloid, thalamic, hypothalamic, and pontine nuclei. In the cerebellum, found at high levels in the granular layer. Detected in the lateral ventricle. Expression overlaps with 5-HT2C receptor expression in all regions of the brain including the choroid plexus, where 5-HT2C receptors are highly enriched.

Its subcellular location is the endomembrane system. It localises to the cell junction. It is found in the tight junction. The protein localises to the synapse. The protein resides in the apical cell membrane. Its subcellular location is the postsynaptic density. It localises to the cell projection. It is found in the dendrite. The protein localises to the synaptosome. Member of the NMDAR signaling complex that may play a role in control of AMPAR potentiation and synaptic plasticity in excitatory synapses. Promotes clustering of HT2RC at the cell surface. This is Multiple PDZ domain protein (Mpdz) from Rattus norvegicus (Rat).